Reading from the N-terminus, the 274-residue chain is Phosphatidylglycerol--prolipoprotein diacylglyceryl transferase (274 aa).

4 consecutive transmembrane segments (helical) span residues 24–44, 60–80, 96–116, and 122–142; these read WYALAYIVGLLGGWWYTRFLS, LLVWATLGTILGGRLGYVVFY, WHGGMSFHGGLVGVITATVLF, and LSVARVGDLVALVAPLGLFFG. Position 143 (Arg-143) interacts with a 1,2-diacyl-sn-glycero-3-phospho-(1'-sn-glycerol). Transmembrane regions (helical) follow at residues 182 to 202, 207 to 227, and 241 to 261; these read ATLEGLVLFCLLGLLWRFTAL, GQIIGLFLIGYGLSRITAEFF, and VTMGQILSLPMILAGIVVFVV.

Belongs to the Lgt family.

It is found in the cell inner membrane. It carries out the reaction L-cysteinyl-[prolipoprotein] + a 1,2-diacyl-sn-glycero-3-phospho-(1'-sn-glycerol) = an S-1,2-diacyl-sn-glyceryl-L-cysteinyl-[prolipoprotein] + sn-glycerol 1-phosphate + H(+). The protein operates within protein modification; lipoprotein biosynthesis (diacylglyceryl transfer). Its function is as follows. Catalyzes the transfer of the diacylglyceryl group from phosphatidylglycerol to the sulfhydryl group of the N-terminal cysteine of a prolipoprotein, the first step in the formation of mature lipoproteins. In Rhodospirillum rubrum (strain ATCC 11170 / ATH 1.1.1 / DSM 467 / LMG 4362 / NCIMB 8255 / S1), this protein is Phosphatidylglycerol--prolipoprotein diacylglyceryl transferase.